We begin with the raw amino-acid sequence, 689 residues long: Elongation factor G 1 (689 aa).

The region spanning 7–282 is the tr-type G domain; it reads DQVRTIGIIS…AVVDFLPSPL (276 aa). GTP-binding positions include 16-23, 80-84, and 134-137; these read SHIDAGKT, DTPGH, and NKMD.

The protein belongs to the TRAFAC class translation factor GTPase superfamily. Classic translation factor GTPase family. EF-G/EF-2 subfamily.

Its subcellular location is the cytoplasm. Functionally, catalyzes the GTP-dependent ribosomal translocation step during translation elongation. During this step, the ribosome changes from the pre-translocational (PRE) to the post-translocational (POST) state as the newly formed A-site-bound peptidyl-tRNA and P-site-bound deacylated tRNA move to the P and E sites, respectively. Catalyzes the coordinated movement of the two tRNA molecules, the mRNA and conformational changes in the ribosome. This Geobacter sulfurreducens (strain ATCC 51573 / DSM 12127 / PCA) protein is Elongation factor G 1.